A 432-amino-acid polypeptide reads, in one-letter code: Trigger factor (432 aa).

Residues 163–248 (GDVVVLDFAA…VHAVKERRLP (86 aa)) enclose the PPIase FKBP-type domain.

It belongs to the FKBP-type PPIase family. Tig subfamily.

It is found in the cytoplasm. It catalyses the reaction [protein]-peptidylproline (omega=180) = [protein]-peptidylproline (omega=0). In terms of biological role, involved in protein export. Acts as a chaperone by maintaining the newly synthesized protein in an open conformation. Functions as a peptidyl-prolyl cis-trans isomerase. In Nitratidesulfovibrio vulgaris (strain DSM 19637 / Miyazaki F) (Desulfovibrio vulgaris), this protein is Trigger factor.